Reading from the N-terminus, the 403-residue chain is Phosphoglycerate kinase (403 aa).

Substrate contacts are provided by residues 21–23, R36, 59–62, R119, and R154; these read DFN and HLGR. Residues K207, G299, E330, and 357–360 contribute to the ATP site; that span reads GGDA.

It belongs to the phosphoglycerate kinase family. In terms of assembly, monomer.

It localises to the cytoplasm. It catalyses the reaction (2R)-3-phosphoglycerate + ATP = (2R)-3-phospho-glyceroyl phosphate + ADP. Its pathway is carbohydrate degradation; glycolysis; pyruvate from D-glyceraldehyde 3-phosphate: step 2/5. This chain is Phosphoglycerate kinase (pgk), found in Chlamydia muridarum (strain MoPn / Nigg).